We begin with the raw amino-acid sequence, 142 residues long: DNA-directed RNA polymerases I and III subunit RPAC2 (142 aa).

The segment covering 1–11 (MTEDIEQKKTA) has biased composition (basic and acidic residues). The interval 1–45 (MTEDIEQKKTATEVTPQEPKHIQEEEEQDVDMTGDEEQEEEPDRE) is disordered. Phosphothreonine occurs at positions 15 and 33. The segment covering 24 to 42 (EEEEQDVDMTGDEEQEEEP) has biased composition (acidic residues). Lys134 is covalently cross-linked (Glycyl lysine isopeptide (Lys-Gly) (interchain with G-Cter in ubiquitin)).

Belongs to the archaeal Rpo11/eukaryotic RPB11/RPC19 RNA polymerase subunit family. Component of the RNA polymerase I (Pol I) and RNA polymerase III (Pol III) complexes. Component of the RNA polymerase I (Pol I) complex consisting of 14 subunits: RPA135, RPA190, RPC40, RPA14, RPB5, RPO26, RPA43, RPB8, RPA12, RPB10, RPC19, RPC10, RPA49 and RPA34. The complex is composed of a horseshoe-shaped core containing ten subunits (RPA135, RPA190, RPB5, RPO26, RPB8, RPB10, RPC10, RPA12, RPC19 and RPC40) where RPA135 and RPA190 form the DNA-binding cleft. Outside of the core, RPA14 and RPA43 form the stalk that mediates interactions with transcription initiation factors and newly synthesized RNA. Component of the RNA polymerase III (Pol III) complex consisting of 17 subunits. Directly interacts with the RPC40 subunit.

The protein resides in the nucleus. Its subcellular location is the nucleolus. Its function is as follows. DNA-dependent RNA polymerases catalyze the transcription of DNA into RNA using the four ribonucleoside triphosphates as substrates. Common core component of RNA polymerases I and III which synthesize ribosomal RNA precursors and small RNAs, such as 5S rRNA and tRNAs, respectively. In Saccharomyces cerevisiae (strain ATCC 204508 / S288c) (Baker's yeast), this protein is DNA-directed RNA polymerases I and III subunit RPAC2 (RPC19).